A 206-amino-acid polypeptide reads, in one-letter code: Large ribosomal subunit protein uL4 (206 aa).

A disordered region spans residues 46-95 (GNRAQKTRAEVKHSTKKPWRQKGTGRARSGMTSSPLWRKGGRAFPNKPDE). Over residues 59–70 (STKKPWRQKGTG) the composition is skewed to basic residues.

Belongs to the universal ribosomal protein uL4 family. Part of the 50S ribosomal subunit.

Functionally, one of the primary rRNA binding proteins, this protein initially binds near the 5'-end of the 23S rRNA. It is important during the early stages of 50S assembly. It makes multiple contacts with different domains of the 23S rRNA in the assembled 50S subunit and ribosome. In terms of biological role, forms part of the polypeptide exit tunnel. The protein is Large ribosomal subunit protein uL4 of Neisseria meningitidis serogroup C (strain 053442).